The primary structure comprises 111 residues: Phosphoribosyl-ATP pyrophosphatase (111 aa).

This sequence belongs to the PRA-PH family.

Its subcellular location is the cytoplasm. It catalyses the reaction 1-(5-phospho-beta-D-ribosyl)-ATP + H2O = 1-(5-phospho-beta-D-ribosyl)-5'-AMP + diphosphate + H(+). The protein operates within amino-acid biosynthesis; L-histidine biosynthesis; L-histidine from 5-phospho-alpha-D-ribose 1-diphosphate: step 2/9. This chain is Phosphoribosyl-ATP pyrophosphatase, found in Ectopseudomonas mendocina (strain ymp) (Pseudomonas mendocina).